We begin with the raw amino-acid sequence, 62 residues long: Ferredoxin-1 (62 aa).

4Fe-4S ferredoxin-type domains are found at residues 3 to 32 (WTVT…LQDG) and 33 to 62 (KAVP…VEEN). Positions 12 and 18 each coordinate [3Fe-4S] cluster. Cys22, Cys42, Cys45, and Cys48 together coordinate [4Fe-4S] cluster. Cys52 is a [3Fe-4S] cluster binding site.

Homodimer. Requires [3Fe-4S] cluster as cofactor. The cofactor is [4Fe-4S] cluster.

Functionally, ferredoxins are iron-sulfur proteins that transfer electrons in a wide variety of metabolic reactions. This ferredoxin serves as a carrier for pyruvate dehydrogenase. The chain is Ferredoxin-1 from Nitratidesulfovibrio vulgaris (strain DSM 19637 / Miyazaki F) (Desulfovibrio vulgaris).